Here is a 273-residue protein sequence, read N- to C-terminus: Protein FAM210A (273 aa).

A disordered region spans residues Arg-94–Leu-116. Basic and acidic residues predominate over residues Pro-106 to Leu-116. The region spanning Asp-118 to Lys-230 is the DUF1279 domain. A helical membrane pass occupies residues Leu-138 to Ile-158. Positions Leu-233–Lys-269 form a coiled coil.

Belongs to the FAM210 family. In terms of assembly, interacts with ATAD3A. As to expression, expressed in skeletal muscle, heart, brain but not in bone.

It localises to the membrane. The protein resides in the mitochondrion. Its subcellular location is the cytoplasm. Its function is as follows. May play a role in the structure and strength of both muscle and bone. The chain is Protein FAM210A (Fam210a) from Mus musculus (Mouse).